The following is a 1006-amino-acid chain: DNA ligase 4 (1006 aa).

The tract at residues 1–36 (MDSDDDYNGPADTNPRLEDEESDLDEKYPNRPRNHS) is disordered. Residues E318, K320, L321, R325, E387, F427, E487, K492, K509, and K511 each contribute to the ATP site. The active-site N6-AMP-lysine intermediate is the K320. E387 provides a ligand contact to Mg(2+). E487 contacts Mg(2+). BRCT domains follow at residues 718-811 (PSGN…PDSL) and 890-1002 (PSGW…GFQP).

The protein belongs to the ATP-dependent DNA ligase family. It depends on Mg(2+) as a cofactor.

It localises to the nucleus. It carries out the reaction ATP + (deoxyribonucleotide)n-3'-hydroxyl + 5'-phospho-(deoxyribonucleotide)m = (deoxyribonucleotide)n+m + AMP + diphosphate.. Functionally, DNA ligase involved in DNA non-homologous end joining (NHEJ); required for double-strand break (DSB) repair. This is DNA ligase 4 (lig4) from Aspergillus oryzae (strain ATCC 42149 / RIB 40) (Yellow koji mold).